We begin with the raw amino-acid sequence, 586 residues long: Phosphomethylpyrimidine synthase (586 aa).

Residues 1-59 (MKQSVSAEQIELKSSLPGSKKVYVDGPREGMKVPMREIEQSDTNGVPNPPIRVYDTSGP) are disordered. Basic and acidic residues predominate over residues 22 to 39 (VYVDGPREGMKVPMREIE). Substrate is bound by residues Asn-193, Met-222, Tyr-251, His-287, 307–309 (SRG), 348–351 (DGLR), and Glu-387. His-391 serves as a coordination point for Zn(2+). Substrate is bound at residue Tyr-414. His-455 contributes to the Zn(2+) binding site. Residues Cys-535, Cys-538, and Cys-543 each coordinate [4Fe-4S] cluster.

It belongs to the ThiC family. [4Fe-4S] cluster serves as cofactor.

The enzyme catalyses 5-amino-1-(5-phospho-beta-D-ribosyl)imidazole + S-adenosyl-L-methionine = 4-amino-2-methyl-5-(phosphooxymethyl)pyrimidine + CO + 5'-deoxyadenosine + formate + L-methionine + 3 H(+). Its pathway is cofactor biosynthesis; thiamine diphosphate biosynthesis. Functionally, catalyzes the synthesis of the hydroxymethylpyrimidine phosphate (HMP-P) moiety of thiamine from aminoimidazole ribotide (AIR) in a radical S-adenosyl-L-methionine (SAM)-dependent reaction. This is Phosphomethylpyrimidine synthase from Bacillus cereus (strain ATCC 10987 / NRS 248).